A 212-amino-acid chain; its full sequence is MQLFHLCLIISCSCPTVQASKLCLGWLWGMDIDPYKEFGASVEVLSFLPSDFFPSNRDLLDTASALDREALESPEHCSPHHTALRQAILCWGELMNLATWVGSNLEDPASRELVVSYVNVNMGLKIRQLLWFHISCLTFGRETVLEYLVSFGVWIRTPPAYRPPNAPILSTLPETTVVRRRGRSPRRRTPSPRRRRSQSPRRRRSQSRESQC.

The signal sequence occupies residues 1 to 19 (MQLFHLCLIISCSCPTVQA). The interval 25 to 27 (GWL) is HBEAG. The interval 165–212 (NAPILSTLPETTVVRRRGRSPRRRTPSPRRRRSQSPRRRRSQSRESQC) is disordered. A compositionally biased stretch (basic residues) spans 178–205 (VRRRGRSPRRRTPSPRRRRSQSPRRRRS). One copy of the 1; half-length repeat lies at 184–190 (SPRRRTP). Residues 184-206 (SPRRRTPSPRRRRSQSPRRRRSQ) are 3 X 8 AA repeats of S-P-R-R-R-R-S-Q. A propeptide spanning residues 184–212 (SPRRRTPSPRRRRSQSPRRRRSQSRESQC) is cleaved from the precursor. Tandem repeats lie at residues 191–198 (SPRRRRSQ) and 199–206 (SPRRRRSQ).

This sequence belongs to the orthohepadnavirus precore antigen family. Homodimerizes. Post-translationally, phosphorylated. Cleaved by host furin.

It is found in the secreted. The protein localises to the host nucleus. May regulate immune response to the intracellular capsid in acting as a T-cell tolerogen, by having an immunoregulatory effect which prevents destruction of infected cells by cytotoxic T-cells. This immune regulation may predispose to chronicity during perinatal infections and prevent severe liver injury during adult infections. The chain is External core antigen from Hepatitis B virus genotype C subtype ayw (isolate China/Tibet127/2002) (HBV-C).